The following is a 129-amino-acid chain: Small ribosomal subunit protein bS6 (129 aa).

The disordered stretch occupies residues 103-129 (LKQKEERAERAPRREERAEAKPEAAAE). Residues 104-129 (KQKEERAERAPRREERAEAKPEAAAE) show a composition bias toward basic and acidic residues.

It belongs to the bacterial ribosomal protein bS6 family.

Its function is as follows. Binds together with bS18 to 16S ribosomal RNA. This Vibrio campbellii (strain ATCC BAA-1116) protein is Small ribosomal subunit protein bS6.